Reading from the N-terminus, the 427-residue chain is Putative ABC transporter substrate-binding protein YesO (427 aa).

Belongs to the bacterial solute-binding protein 1 family.

Functionally, may play a role in the degradation of type I rhamnogalacturonan derived from plant cell walls. The chain is Putative ABC transporter substrate-binding protein YesO (yesO) from Bacillus subtilis (strain 168).